We begin with the raw amino-acid sequence, 300 residues long: MKTGNQFNTVALVGRSNTPGIAEPLATLAGCIAKLGFDVVFEADTAREIGISGYPALTPAEIGARADVAVVLGGDGTMLGIGRQLAPYKTPLIGINHGRLGFITDIAAADMQALVPVILSGKFEREERSLLEARIVRNGEPIYHALAFNDVVVNRSGFSGMVELRASVDGRYMYNQRSDGLIVATPTGSTAYALSSAGPILHPQLQGVVLVPIAPHALSNRPIVLPDDSKIAIQIVAGRDVNVNFDMQSFTALELNDTIEVRRSKHTVPFLHPIGYSYYATLRKKLHWNEHASNEDDKAS.

The active-site Proton acceptor is Asp75. Residues 75–76 (DG), 149–150 (ND), Arg177, Asp179, 190–195 (TAYALS), Ala214, and Gln248 contribute to the NAD(+) site.

The protein belongs to the NAD kinase family. Requires a divalent metal cation as cofactor.

Its subcellular location is the cytoplasm. It carries out the reaction NAD(+) + ATP = ADP + NADP(+) + H(+). In terms of biological role, involved in the regulation of the intracellular balance of NAD and NADP, and is a key enzyme in the biosynthesis of NADP. Catalyzes specifically the phosphorylation on 2'-hydroxyl of the adenosine moiety of NAD to yield NADP. In Burkholderia vietnamiensis (strain G4 / LMG 22486) (Burkholderia cepacia (strain R1808)), this protein is NAD kinase.